The following is a 152-amino-acid chain: Synaptobrevin (152 aa).

Positions 1–16 are enriched in polar residues; it reads MENNEAPSPSGSNNND. Residues 1 to 30 form a disordered region; that stretch reads MENNEAPSPSGSNNNDFPILPPPPNANDNY. The Cytoplasmic segment spans residues 1-110; sequence MENNEAPSPS…KRKQWWANMK (110 aa). In terms of domain architecture, v-SNARE coiled-coil homology spans 47–107; sequence KLQQTQAKVD…GKLKRKQWWA (61 aa). A helical; Anchor for type IV membrane protein membrane pass occupies residues 111–130; sequence MMIILGVIAVVLLIIVLVSV. At 131–152 the chain is on the vesicular side; the sequence is WPSSSDSGSGGGNKAITQAPPH. The disordered stretch occupies residues 133 to 152; that stretch reads SSSDSGSGGGNKAITQAPPH.

This sequence belongs to the synaptobrevin family. Part of the SNARE core complex containing Snap25 and syntaxin. Post-translationally, ubiquitinated by gzl, regulating endocytic trafficking. In wing imaginal disks, ubiquitination by gzl promotes transcytosis of wingless (wg) to the basolateral surface. In terms of tissue distribution, not nervous system-specific; abundant in cells of the gut and Malpighian tubules.

It is found in the cytoplasmic vesicle. The protein localises to the secretory vesicle. Its subcellular location is the synaptic vesicle membrane. The protein resides in the cell membrane. In terms of biological role, involved in the targeting and/or fusion of transport vesicles to their target membrane. This Drosophila melanogaster (Fruit fly) protein is Synaptobrevin.